Reading from the N-terminus, the 420-residue chain is Argininosuccinate synthase (420 aa).

Residues 9 to 17 (AYSGGLDTS) and Ala-35 contribute to the ATP site. Residues Tyr-86 and Ser-91 each contribute to the L-citrulline site. 114-122 (SHGCTGKGN) is an ATP binding site. Positions 118, 122, and 123 each coordinate L-aspartate. Residue Asn-122 coordinates L-citrulline. Arg-126, Ser-179, Ser-188, Glu-273, and Tyr-285 together coordinate L-citrulline.

The protein belongs to the argininosuccinate synthase family. Type 1 subfamily. Homotetramer.

The protein localises to the cytoplasm. It catalyses the reaction L-citrulline + L-aspartate + ATP = 2-(N(omega)-L-arginino)succinate + AMP + diphosphate + H(+). The protein operates within amino-acid biosynthesis; L-arginine biosynthesis; L-arginine from L-ornithine and carbamoyl phosphate: step 2/3. In terms of biological role, catalyzes the eighth step in arginine biosynthesis. Also has a catabolic function as the first enzyme of citrulline utilization as nitrogen source via arginine and the reactions involved in the arginase pathway. The sequence is that of Argininosuccinate synthase (ARG1) from Saccharomyces cerevisiae (strain ATCC 204508 / S288c) (Baker's yeast).